The chain runs to 312 residues: Expansin-A24 (312 aa).

Residues 1–27 form the signal peptide; the sequence is MELLKRKLYAKILMMVMVIWIAPMTNG. The disordered stretch occupies residues 31–86; sequence ASHVPGGRPGAHPSHGAHPAHGAHPSHGAHPSHGAHPSHGAHPSHGALPSHGGQVP. The span at 40–77 shows a compositional bias: low complexity; the sequence is GAHPSHGAHPAHGAHPSHGAHPSHGAHPSHGAHPSHGA. 6 consecutive repeat copies span residues 42–47, 48–53, 54–59, 60–65, 66–71, and 72–77. The tract at residues 42 to 77 is 6 X 6 AA tandem repeats of H-P-S-H-G-A; the sequence is HPSHGAHPAHGAHPSHGAHPSHGAHPSHGAHPSHGA. The Expansin-like EG45 domain occupies 108–218; it reads QGACGYGDLH…RRVPCAKIGG (111 aa). The Expansin-like CBD domain maps to 228–307; the sequence is HFLMILPYNV…DWKCNGQSFD (80 aa).

This sequence belongs to the expansin family. Expansin A subfamily.

The protein resides in the secreted. The protein localises to the cell wall. It localises to the membrane. Its function is as follows. Causes loosening and extension of plant cell walls by disrupting non-covalent bonding between cellulose microfibrils and matrix glucans. No enzymatic activity has been found. The polypeptide is Expansin-A24 (EXPA24) (Arabidopsis thaliana (Mouse-ear cress)).